A 355-amino-acid polypeptide reads, in one-letter code: UDP-N-acetylglucosamine--N-acetylmuramyl-(pentapeptide) pyrophosphoryl-undecaprenol N-acetylglucosamine transferase (355 aa).

UDP-N-acetyl-alpha-D-glucosamine contacts are provided by residues 15–17 (TGG), N127, R163, S191, I244, 263–268 (ALTVSE), and Q288.

It belongs to the glycosyltransferase 28 family. MurG subfamily.

The protein resides in the cell inner membrane. The enzyme catalyses di-trans,octa-cis-undecaprenyl diphospho-N-acetyl-alpha-D-muramoyl-L-alanyl-D-glutamyl-meso-2,6-diaminopimeloyl-D-alanyl-D-alanine + UDP-N-acetyl-alpha-D-glucosamine = di-trans,octa-cis-undecaprenyl diphospho-[N-acetyl-alpha-D-glucosaminyl-(1-&gt;4)]-N-acetyl-alpha-D-muramoyl-L-alanyl-D-glutamyl-meso-2,6-diaminopimeloyl-D-alanyl-D-alanine + UDP + H(+). It participates in cell wall biogenesis; peptidoglycan biosynthesis. Functionally, cell wall formation. Catalyzes the transfer of a GlcNAc subunit on undecaprenyl-pyrophosphoryl-MurNAc-pentapeptide (lipid intermediate I) to form undecaprenyl-pyrophosphoryl-MurNAc-(pentapeptide)GlcNAc (lipid intermediate II). The sequence is that of UDP-N-acetylglucosamine--N-acetylmuramyl-(pentapeptide) pyrophosphoryl-undecaprenol N-acetylglucosamine transferase from Citrobacter koseri (strain ATCC BAA-895 / CDC 4225-83 / SGSC4696).